The sequence spans 480 residues: Sialyltransferase-like protein 5 (480 aa).

Residues 1-17 (MARAPPPLSSLPPPPRR) are Cytoplasmic-facing. A signal-anchor for type II membrane protein transmembrane segment spans residues 18–38 (PTVVLLLGLALAFCLAVLSIQ). Topologically, residues 39–480 (SSFFTAPRLA…VCVRHERSSS (442 aa)) are lumenal. 4 N-linked (GlcNAc...) asparagine glycosylation sites follow: N98, N130, N165, and N321.

The protein belongs to the glycosyltransferase 29 family.

Its subcellular location is the golgi apparatus membrane. In terms of biological role, may possess sialyltransferase-like activity in vitro. This is Sialyltransferase-like protein 5 from Oryza sativa subsp. japonica (Rice).